Consider the following 117-residue polypeptide: MMLEPSIDKLLDQVDSKYSLVVLEAKRAHELRDKERPTKEFKSVKRTLQALEEIADGTVKIHPAPELKRETLVEKRELERLQAKMKEQLIKEQIAKEEAEEEAKQKNSRAAKAAAAE.

Over residues 96–105 the composition is skewed to basic and acidic residues; it reads KEEAEEEAKQ. A disordered region spans residues 96–117; the sequence is KEEAEEEAKQKNSRAAKAAAAE. The segment covering 108 to 117 has biased composition (low complexity); it reads SRAAKAAAAE.

The protein belongs to the RNA polymerase subunit omega family. The RNAP catalytic core consists of 2 alpha, 1 beta, 1 beta' and 1 omega subunit. When a sigma factor is associated with the core the holoenzyme is formed, which can initiate transcription.

The catalysed reaction is RNA(n) + a ribonucleoside 5'-triphosphate = RNA(n+1) + diphosphate. In terms of biological role, promotes RNA polymerase assembly. Latches the N- and C-terminal regions of the beta' subunit thereby facilitating its interaction with the beta and alpha subunits. In Lactococcus lactis subsp. cremoris (strain SK11), this protein is DNA-directed RNA polymerase subunit omega.